A 220-amino-acid polypeptide reads, in one-letter code: Deoxyribose-phosphate aldolase (220 aa).

Aspartate 89 (proton donor/acceptor) is an active-site residue. Lysine 151 serves as the catalytic Schiff-base intermediate with acetaldehyde. Lysine 180 functions as the Proton donor/acceptor in the catalytic mechanism.

The protein belongs to the DeoC/FbaB aldolase family. DeoC type 1 subfamily.

The protein resides in the cytoplasm. The catalysed reaction is 2-deoxy-D-ribose 5-phosphate = D-glyceraldehyde 3-phosphate + acetaldehyde. It functions in the pathway carbohydrate degradation; 2-deoxy-D-ribose 1-phosphate degradation; D-glyceraldehyde 3-phosphate and acetaldehyde from 2-deoxy-alpha-D-ribose 1-phosphate: step 2/2. Its function is as follows. Catalyzes a reversible aldol reaction between acetaldehyde and D-glyceraldehyde 3-phosphate to generate 2-deoxy-D-ribose 5-phosphate. This chain is Deoxyribose-phosphate aldolase, found in Lactococcus lactis subsp. lactis (strain IL1403) (Streptococcus lactis).